A 614-amino-acid chain; its full sequence is Serine/threonine-protein kinase Pkn1 (614 aa).

One can recognise a Protein kinase domain in the interval 13-276; sequence YKVIAELGHG…TSGEQLQVTL (264 aa). ATP is bound by residues 19–27 and lysine 42; that span reads LGHGLWSRD.

The protein belongs to the protein kinase superfamily. Ser/Thr protein kinase family. Interacts with PknD, interacts with and phosphorylates IncG. Autophosphorylates on serine and threonine residues. Present in elementary bodies 40 hours post-infection as 2 proteins of approximately 70 and 65 kDa; the smaller one may be due to differential phosphorylation or degradation.

It carries out the reaction L-seryl-[protein] + ATP = O-phospho-L-seryl-[protein] + ADP + H(+). The enzyme catalyses L-threonyl-[protein] + ATP = O-phospho-L-threonyl-[protein] + ADP + H(+). In terms of biological role, together with the serine/threonine kinase PknD, may play a role in specific interactions with host proteins during host intracellular growth. Autophosphorylates and phosphorylates IncG, an inclusion-membrane protein required for the modification of the nascent chlamydial inclusion. The polypeptide is Serine/threonine-protein kinase Pkn1 (pkn1) (Chlamydia trachomatis serovar L2 (strain ATCC VR-902B / DSM 19102 / 434/Bu)).